The following is a 237-amino-acid chain: Ribonuclease 3 (237 aa).

In terms of domain architecture, RNase III spans 4 to 133 (LTELEKSLGV…VLAAIYLDKG (130 aa)). Glu-46 contributes to the Mg(2+) binding site. Residues Asp-50 and Glu-122 contribute to the active site. Glu-122 serves as a coordination point for Mg(2+). In terms of domain architecture, DRBM spans 160–229 (DYKSRLQELV…AKEALQQFEN (70 aa)).

Belongs to the ribonuclease III family. Homodimer. The cofactor is Mg(2+).

It is found in the cytoplasm. It carries out the reaction Endonucleolytic cleavage to 5'-phosphomonoester.. Its function is as follows. Digests double-stranded RNA. Involved in the processing of primary rRNA transcript to yield the immediate precursors to the large and small rRNAs (23S and 16S). Processes some mRNAs, and tRNAs when they are encoded in the rRNA operon. Processes pre-crRNA and tracrRNA of type II CRISPR loci if present in the organism. This Dehalococcoides mccartyi (strain ATCC BAA-2266 / KCTC 15142 / 195) (Dehalococcoides ethenogenes (strain 195)) protein is Ribonuclease 3.